The following is a 163-amino-acid chain: Cyclic pyranopterin monophosphate synthase (163 aa).

Substrate is bound by residues 75-77 and 115-116; these read MCH and ME. Asp130 is a catalytic residue.

The protein belongs to the MoaC family. In terms of assembly, homohexamer; trimer of dimers.

It catalyses the reaction (8S)-3',8-cyclo-7,8-dihydroguanosine 5'-triphosphate = cyclic pyranopterin phosphate + diphosphate. It participates in cofactor biosynthesis; molybdopterin biosynthesis. Functionally, catalyzes the conversion of (8S)-3',8-cyclo-7,8-dihydroguanosine 5'-triphosphate to cyclic pyranopterin monophosphate (cPMP). The chain is Cyclic pyranopterin monophosphate synthase from Bacillus pumilus (strain SAFR-032).